The chain runs to 203 residues: Small ribosomal subunit protein uS4 (203 aa).

The region spanning 93–156 (RRLDNVVYRL…AKVPAILEAV (64 aa)) is the S4 RNA-binding domain.

It belongs to the universal ribosomal protein uS4 family. Part of the 30S ribosomal subunit. Contacts protein S5. The interaction surface between S4 and S5 is involved in control of translational fidelity.

In terms of biological role, one of the primary rRNA binding proteins, it binds directly to 16S rRNA where it nucleates assembly of the body of the 30S subunit. With S5 and S12 plays an important role in translational accuracy. In Streptococcus thermophilus (strain CNRZ 1066), this protein is Small ribosomal subunit protein uS4.